A 155-amino-acid chain; its full sequence is Ribosome maturation factor RimP (155 aa).

It belongs to the RimP family.

The protein resides in the cytoplasm. Functionally, required for maturation of 30S ribosomal subunits. This chain is Ribosome maturation factor RimP, found in Gemmatimonas aurantiaca (strain DSM 14586 / JCM 11422 / NBRC 100505 / T-27).